A 299-amino-acid polypeptide reads, in one-letter code: Methionyl-tRNA formyltransferase (299 aa).

109–112 is a (6S)-5,6,7,8-tetrahydrofolate binding site; it reads SLLP.

This sequence belongs to the Fmt family.

The enzyme catalyses L-methionyl-tRNA(fMet) + (6R)-10-formyltetrahydrofolate = N-formyl-L-methionyl-tRNA(fMet) + (6S)-5,6,7,8-tetrahydrofolate + H(+). Functionally, attaches a formyl group to the free amino group of methionyl-tRNA(fMet). The formyl group appears to play a dual role in the initiator identity of N-formylmethionyl-tRNA by promoting its recognition by IF2 and preventing the misappropriation of this tRNA by the elongation apparatus. In Wolbachia sp. subsp. Drosophila simulans (strain wRi), this protein is Methionyl-tRNA formyltransferase.